A 227-amino-acid polypeptide reads, in one-letter code: Translation initiation factor 6 (227 aa).

This sequence belongs to the eIF-6 family.

Functionally, binds to the 50S ribosomal subunit and prevents its association with the 30S ribosomal subunit to form the 70S initiation complex. This Pyrococcus horikoshii (strain ATCC 700860 / DSM 12428 / JCM 9974 / NBRC 100139 / OT-3) protein is Translation initiation factor 6.